Consider the following 642-residue polypeptide: Bifunctional protein glk (642 aa).

Positions 1-340 (MSTGAQSKAV…QLSNRSGGAS (340 aa)) are glucokinase. 23-28 (ADVGGT) lines the ATP pocket. An HTH rpiR-type domain is found at 341 to 417 (SAVFERIRQM…LKLATGLTGT (77 aa)). The putative HTH-type transcriptional regulator stretch occupies residues 341 to 642 (SAVFERIRQM…SPAAKDVARD (302 aa)). A DNA-binding region (H-T-H motif) is located at residues 377–396 (IVDIARKADVSQPTVIRFCR). An SIS domain is found at 461 to 600 (AIEILNGARR…AVGVAIRRAS (140 aa)). Residues 576–596 (SMISRILHLLMIDILAVGVAI) form a helical membrane-spanning segment.

This sequence in the N-terminal section; belongs to the bacterial glucokinase family.

The protein resides in the membrane. The catalysed reaction is D-glucose + ATP = D-glucose 6-phosphate + ADP + H(+). The sequence is that of Bifunctional protein glk (glk) from Burkholderia orbicola (strain AU 1054).